Consider the following 84-residue polypeptide: MPNLGVPELLIIALVIFLLFGATRLPNAARSLGRSMRIFKSEMDEMKTDGDKKELAEKQAPTAEQQQAQDLAQPKSEQPNEHNA.

The chain crosses the membrane as a helical span at residues 1–21; it reads MPNLGVPELLIIALVIFLLFG. The span at 42–57 shows a compositional bias: basic and acidic residues; that stretch reads EMDEMKTDGDKKELAE. Positions 42–84 are disordered; the sequence is EMDEMKTDGDKKELAEKQAPTAEQQQAQDLAQPKSEQPNEHNA. Positions 62–77 are enriched in polar residues; the sequence is TAEQQQAQDLAQPKSE.

The protein belongs to the TatA/E family. The Tat system comprises two distinct complexes: a TatABC complex, containing multiple copies of TatA, TatB and TatC subunits, and a separate TatA complex, containing only TatA subunits. Substrates initially bind to the TatABC complex, which probably triggers association of the separate TatA complex to form the active translocon.

It localises to the cell membrane. Part of the twin-arginine translocation (Tat) system that transports large folded proteins containing a characteristic twin-arginine motif in their signal peptide across membranes. TatA could form the protein-conducting channel of the Tat system. This Corynebacterium jeikeium (strain K411) protein is Sec-independent protein translocase protein TatA.